Reading from the N-terminus, the 218-residue chain is Small ribosomal subunit protein uS4 (218 aa).

An S4 RNA-binding domain is found at 111–175 (RRLQTQVLRL…SPLKNESHPE (65 aa)). The segment at 192-218 (KAAAEAKQAREKPPERGGGRRKRGGRR) is disordered. Residues 198–209 (KQAREKPPERGG) show a composition bias toward basic and acidic residues.

This sequence belongs to the universal ribosomal protein uS4 family. In terms of assembly, part of the 30S ribosomal subunit. Contacts protein S5. The interaction surface between S4 and S5 is involved in control of translational fidelity.

In terms of biological role, one of the primary rRNA binding proteins, it binds directly to 16S rRNA where it nucleates assembly of the body of the 30S subunit. With S5 and S12 plays an important role in translational accuracy. The chain is Small ribosomal subunit protein uS4 from Methanosarcina acetivorans (strain ATCC 35395 / DSM 2834 / JCM 12185 / C2A).